The sequence spans 112 residues: uncharacterized protein (112 aa).

To Buchnera BUsg564.

This is an uncharacterized protein from Buchnera aphidicola subsp. Acyrthosiphon pisum (strain APS) (Acyrthosiphon pisum symbiotic bacterium).